The primary structure comprises 419 residues: Napsin-A (419 aa).

A signal peptide spans Met-1–Leu-16. In terms of domain architecture, Peptidase A1 spans Tyr-73–Ala-394. Asn-85 is a glycosylation site (N-linked (GlcNAc...) asparagine). The active site involves Asp-91. Cysteines 104 and 111 form a disulfide. N-linked (GlcNAc...) asparagine glycans are attached at residues Asn-128 and Asn-149. Cys-269 and Cys-273 form a disulfide bridge. Residue Asp-278 is part of the active site. A disulfide bridge connects residues Cys-312 and Cys-349. A glycan (N-linked (GlcNAc...) asparagine) is linked at Asn-331. The interval Val-391 to Gly-419 is disordered.

The protein belongs to the peptidase A1 family. In terms of tissue distribution, expressed at the highest levels in the kidney, at a moderate level in the lung, and at low levels in the spleen and adipose tissue.

It localises to the secreted. In terms of biological role, may be involved in processing of pneumocyte surfactant precursors. The polypeptide is Napsin-A (Napsa) (Mus musculus (Mouse)).